A 678-amino-acid polypeptide reads, in one-letter code: MNRKDIKRKSHQECSGKAGGHGRPRQARRHKTCPTPREISKVMASLNLGVLSESSCSVDELLEECIRCFDSAGSLHRGDHILKMVLTMHSWVLPSSDLAARLLTSYQKAAKDARELRQLQICYLVRYWLTHHPEVVHQEPQLEAIINRFWTTVAQEGNMAQRSLGDASNLLSPGGPGPPPLMSSPGLGKKRKVSLLFDHLETEELAQHLTYLEFRSFQAITPQDLRGYVLQGSVRGCPALEGSVGLSNSVSRWVQVMVLSRPGPAQRAQVLDKFIRVAQRLRQMQNFNTLMAVTGGLCHSAISRLKDSHVHLSPDSTKALLELTELLSSHNNYAYYRRTWASCTDFRLPVLGVHLKDLVSLYEAHPDRLPDGRLHLPKLNSLYLRLQELAALQRQHPPCSANEDLLHLLTLSLDLFYTEDEIYELSYAREPRCPKSLPLSPFKAPVVVEWAHGVTPKPDSATLGQHVEQLVESVFKNYDPEGHGSISLEDFEKLSANFPFACHGLHPPPRHGSGSFSREELTKYLLHASAICSKLGLAFLHAFQEVTFRKPTFCHSCNGFVSTGPLWGVTKRGYRCQDCGLCCHRHCRDQVRVECKKRPETKGDPGPPGAPGPATPLPPTGCGSEEGLSYTLSPHLESGCHLHHAWTQTESSHSSWEPEMVPCPAPVLPSKASSKSSV.

2 stretches are compositionally biased toward basic residues: residues 1–10 (MNRKDIKRKS) and 20–32 (GHGR…RHKT). 2 disordered regions span residues 1-33 (MNRK…HKTC) and 165-185 (GDAS…MSSP). The 127-residue stretch at 49–175 (GVLSESSCSV…DASNLLSPGG (127 aa)) folds into the N-terminal Ras-GEF domain. The Ras-GEF domain maps to 201 to 432 (ETEELAQHLT…YELSYAREPR (232 aa)). Positions 466–501 (HVEQLVESVFKNYDPEGHGSISLEDFEKLSANFPFA) constitute an EF-hand domain. The Phorbol-ester/DAG-type zinc-finger motif lies at 540–595 (LHAFQEVTFRKPTFCHSCNGFVSTGPLWGVTKRGYRCQDCGLCCHRHCRDQVRVEC). Disordered stretches follow at residues 598 to 620 (RPET…LPPT) and 651 to 678 (SSHS…KSSV). Residues 605–619 (PGPPGAPGPATPLPP) are compositionally biased toward pro residues.

Belongs to the RASGRP family. Expressed by mast cells and their progenitors (at protein level).

Its subcellular location is the cytoplasm. The protein localises to the cell membrane. Its function is as follows. Functions as a cation- and diacylglycerol (DAG)-regulated nucleotide exchange factor activating Ras through the exchange of bound GDP for GTP. In neutrophils, participates in a phospholipase C-activating N-formyl peptide-activated GPCR (G protein-coupled receptor) signaling pathway by promoting Ras-mediated activation of PIK3CG/PI3Kgamma to promote neutrophil functional responses. In CD117(+) dendritic cells and mast cells, participates in an lipopolysaccharide (LPS)-activated signaling pathway that stimulates the production of interferon-gamma and other pro-inflammatory cytokines by natural killer (NK) cells. May function in mast cell differentiation. Does not appear to be required for the development of B-cells, DC-cells, T-cells, or NK-cells. The sequence is that of RAS guanyl-releasing protein 4 (Rasgrp4) from Rattus norvegicus (Rat).